The sequence spans 540 residues: 2-succinyl-5-enolpyruvyl-6-hydroxy-3-cyclohexene-1-carboxylate synthase (540 aa).

Belongs to the TPP enzyme family. MenD subfamily. As to quaternary structure, homodimer. Mg(2+) is required as a cofactor. The cofactor is Mn(2+). It depends on thiamine diphosphate as a cofactor.

It carries out the reaction isochorismate + 2-oxoglutarate + H(+) = 5-enolpyruvoyl-6-hydroxy-2-succinyl-cyclohex-3-ene-1-carboxylate + CO2. The protein operates within quinol/quinone metabolism; 1,4-dihydroxy-2-naphthoate biosynthesis; 1,4-dihydroxy-2-naphthoate from chorismate: step 2/7. It participates in quinol/quinone metabolism; menaquinone biosynthesis. Catalyzes the thiamine diphosphate-dependent decarboxylation of 2-oxoglutarate and the subsequent addition of the resulting succinic semialdehyde-thiamine pyrophosphate anion to isochorismate to yield 2-succinyl-5-enolpyruvyl-6-hydroxy-3-cyclohexene-1-carboxylate (SEPHCHC). The sequence is that of 2-succinyl-5-enolpyruvyl-6-hydroxy-3-cyclohexene-1-carboxylate synthase from Mycobacteroides abscessus (strain ATCC 19977 / DSM 44196 / CCUG 20993 / CIP 104536 / JCM 13569 / NCTC 13031 / TMC 1543 / L948) (Mycobacterium abscessus).